Here is an 86-residue protein sequence, read N- to C-terminus: Large ribosomal subunit protein uL23 (86 aa).

This sequence belongs to the universal ribosomal protein uL23 family. Part of the 50S ribosomal subunit. Contacts protein L29.

Its function is as follows. Binds to 23S rRNA. One of the proteins that surrounds the polypeptide exit tunnel on the outside of the ribosome. The sequence is that of Large ribosomal subunit protein uL23 from Methanothermobacter thermautotrophicus (strain ATCC 29096 / DSM 1053 / JCM 10044 / NBRC 100330 / Delta H) (Methanobacterium thermoautotrophicum).